The following is a 568-amino-acid chain: MRQTMTFIPTLKEVPADAEVKSHQLLLRAGFIRQTASGIYSYLPLATLMLRKIETIIREELEAIGAAELLMPALQPAELWQESGRWNDYGPELMRLKDRASRDFALGPTHEEVITALLRDEVKSYKRLPLTLYQIQTKFRDEKRPRFGLLRGREFIMKDAYSFHATSESLDEVYNLMHQAYSNIFTRCGLEFRSVIADSGSIGGNESKEFMALSDIGEDTIAYSDASDYAANTEMAPVLYMEKKSHELEKELEKVATPDQKSIADIVEFLEVPIEKTMKSMLYQVDEEVIMVLVRGDHEVNDIKIKNALDATNVELVDPAVAVELLGANFGSLGPINVPENTRVFADNAVKDIVNAVVGANEDGFHYINVNADRDFTVTSYFDLRMIQVGDLSPDGQGVIKFAEGIEVGHIFKLGTKYSQAMNATILDENGRAQPIIMGCYGIGVSRILSAIAEQSNDENGFVWDKQISPFDLHLIPVNMKSEEQVAFAETLYTSLQGAGFSVLIDDRAERAGVKFADADLIGLPIRITVGKKAAEGVVEVKIRKTGEMIEVRQDELLNTLPILFGDK.

It belongs to the class-II aminoacyl-tRNA synthetase family. ProS type 1 subfamily. In terms of assembly, homodimer.

Its subcellular location is the cytoplasm. It carries out the reaction tRNA(Pro) + L-proline + ATP = L-prolyl-tRNA(Pro) + AMP + diphosphate. Functionally, catalyzes the attachment of proline to tRNA(Pro) in a two-step reaction: proline is first activated by ATP to form Pro-AMP and then transferred to the acceptor end of tRNA(Pro). As ProRS can inadvertently accommodate and process non-cognate amino acids such as alanine and cysteine, to avoid such errors it has two additional distinct editing activities against alanine. One activity is designated as 'pretransfer' editing and involves the tRNA(Pro)-independent hydrolysis of activated Ala-AMP. The other activity is designated 'posttransfer' editing and involves deacylation of mischarged Ala-tRNA(Pro). The misacylated Cys-tRNA(Pro) is not edited by ProRS. This is Proline--tRNA ligase from Listeria monocytogenes serotype 4a (strain HCC23).